Reading from the N-terminus, the 344-residue chain is Bifunctional trans-3-hydroxy-L-proline dehydratase/2-epimerase (344 aa).

The Proton acceptor role is filled by Ser90. Residues 91–92 (GS), Asp252, and 257–258 (GT) each bind substrate.

The protein belongs to the proline racemase family.

It carries out the reaction trans-3-hydroxy-L-proline = 1-pyrroline-2-carboxylate + H2O. The catalysed reaction is trans-3-hydroxy-L-proline = cis-3-hydroxy-D-proline. Its function is as follows. Bifunctional enzyme catalyzing both the dehydration of trans-3-hydroxy-L-proline (t3LHyp) to Delta(1)-pyrroline-2-carboxylate (Pyr2C) and 2-epimerization of t3LHyp to cis-3-hydroxy-D-proline (c3DHyp). No dehydratase activity with L-proline, trans-4-hydroxy-L-proline (t4LHyp), cis-4-hydroxy-L-proline (c4LHyp), D-proline, cis-4-hydroxy-D-proline (c4DHyp), trans-4-hydroxy-D-proline (t4DHyp) or L-serine as substrates. Displays neither t4LHyp epimerase nor proline racemase activity. Is likely involved in a degradation pathway that converts t3LHyp to L-proline, which would allow P.aeruginosa to grow on t3LHyp as a sole carbon source. This chain is Bifunctional trans-3-hydroxy-L-proline dehydratase/2-epimerase, found in Pseudomonas aeruginosa (strain ATCC 15692 / DSM 22644 / CIP 104116 / JCM 14847 / LMG 12228 / 1C / PRS 101 / PAO1).